The chain runs to 151 residues: S-protein homolog 74 (151 aa).

An N-terminal signal peptide occupies residues 1–25; sequence MNYIKQFILAICFYLVLTCQDHVLA.

The protein belongs to the plant self-incompatibility (S1) protein family.

The protein localises to the secreted. This Arabidopsis thaliana (Mouse-ear cress) protein is S-protein homolog 74.